Reading from the N-terminus, the 297-residue chain is MSGAGVGGGIVIVDKPAGMTSHDVVGRCRRIFGTRKVGHAGTLDPMATGVLVVGIDRATKLLGLLTATDKSYEATIRLGQTTTTEDAEGDVVETTPATGITDEQIGHAVAALRGEIDQVPSAVSAIKVGGQRAYKLAREGQTVELAARRVRIDRFEVLAIRRVDGFVDVDVAVDCSSGTYIRALARDVGVTLGVGGHLTLLRRTRVGRFGLDEAYPLDALADEPRLSHSLDEACLLSFPRRDLTPAEAESTRHGRALAPAGIDGVYAAAAPDGSVLALLEDGPQRTKSVVVLRPATL.

The active-site Nucleophile is the Asp44.

It belongs to the pseudouridine synthase TruB family. Type 1 subfamily.

The enzyme catalyses uridine(55) in tRNA = pseudouridine(55) in tRNA. Its function is as follows. Responsible for synthesis of pseudouridine from uracil-55 in the psi GC loop of transfer RNAs. The polypeptide is tRNA pseudouridine synthase B (Mycobacterium sp. (strain JLS)).